We begin with the raw amino-acid sequence, 109 residues long: uncharacterized protein (109 aa).

The tract at residues 63 to 109 (DPSTWEPEEHETEHCRGHTLPEKKQKPQGGHGSDKDEDKGNCGCDHC) is disordered. Basic and acidic residues-rich tracts occupy residues 73–87 (ETEH…EKKQ) and 94–109 (GSDK…CDHC).

This is an uncharacterized protein from Caenorhabditis elegans.